Reading from the N-terminus, the 617-residue chain is Phenylalanine--tRNA ligase beta subunit (617 aa).

In terms of domain architecture, B5 spans 306-383 (IQEKQINAQV…IGYGYDNLKK (78 aa)). D361, D367, E370, and D371 together coordinate Mg(2+).

It belongs to the phenylalanyl-tRNA synthetase beta subunit family. Type 2 subfamily. In terms of assembly, tetramer of two alpha and two beta subunits. Mg(2+) serves as cofactor.

It localises to the cytoplasm. It carries out the reaction tRNA(Phe) + L-phenylalanine + ATP = L-phenylalanyl-tRNA(Phe) + AMP + diphosphate + H(+). The chain is Phenylalanine--tRNA ligase beta subunit (phesB) from Dictyostelium discoideum (Social amoeba).